Reading from the N-terminus, the 150-residue chain is MARSHDTKGSGGLSQRQLRVGEQVRHALAQVLQRGEIRDDLIERTVISVSEVRMSPDLKIATCFITPLGSADPQAVIKALASHAKFIRGRVAPSLAQMKYMPEFRFRPDTSFDNFSKIDALLRFPEVARDLSHDDDEDGGADEAPRNGDE.

Positions 131–150 (LSHDDDEDGGADEAPRNGDE) are disordered.

Belongs to the RbfA family. Monomer. Binds 30S ribosomal subunits, but not 50S ribosomal subunits or 70S ribosomes.

It localises to the cytoplasm. In terms of biological role, one of several proteins that assist in the late maturation steps of the functional core of the 30S ribosomal subunit. Associates with free 30S ribosomal subunits (but not with 30S subunits that are part of 70S ribosomes or polysomes). Required for efficient processing of 16S rRNA. May interact with the 5'-terminal helix region of 16S rRNA. The chain is Ribosome-binding factor A from Brucella melitensis biotype 2 (strain ATCC 23457).